We begin with the raw amino-acid sequence, 614 residues long: Nuclear receptor subfamily 1 group D member 1 (614 aa).

The segment covering 1–48 (MTTLDSNNNTGGVITYIGSSGSSPNRTSPESLYSDSSNGSFQSLTQGC) has biased composition (polar residues). The segment at 1 to 70 (MTTLDSNNNT…TQDPARSFGS (70 aa)) is required for phosphorylation by CSNK1E and cytoplasmic localization. The segment at 1 to 120 (MTTLDSNNNT…GNRVSPSKST (120 aa)) is disordered. A modulating region spans residues 1–129 (MTTLDSNNNT…TSNITKLNGM (129 aa)). Residues 49–285 (PTYFPPSPTG…PPRSPSPEPT (237 aa)) form a crucial for activation of GJA1 region. 2 positions are modified to phosphoserine; by GSK3-beta: S55 and S59. A compositionally biased stretch (low complexity) spans 69–103 (GSIPPSLGDDGSPSSSSSSSSSSSSSFYNGSPPGG). Residues 130 to 206 (VLLCKVCGDV…VGMSRDAVRF (77 aa)) constitute a DNA-binding region (nuclear receptor). 2 consecutive NR C4-type zinc fingers follow at residues 133 to 153 (CKVCGDVASGFHYGVHACEGC) and 170 to 194 (CLKNENCSIVRINRNRCQQCRFKKC). An N6-acetyllysine; by KAT5 mark is found at K192 and K193. The disordered stretch occupies residues 233–286 (SSQCPLETPPTQHPTPGPMGPSPPPAPAPSPLVGFSQFPQQLTPPRSPSPEPTV). A compositionally biased stretch (pro residues) spans 239 to 262 (ETPPTQHPTPGPMGPSPPPAPAPS). Phosphothreonine; by CDK1 is present on T275. An NR LBD domain is found at 285 to 614 (TVEDVISQVA…KLLSFRVDAQ (330 aa)). Residue C418 participates in heme binding. The residue at position 591 (K591) is an N6-acetyllysine. Residue H602 coordinates heme.

This sequence belongs to the nuclear hormone receptor family. NR1 subfamily. Binds DNA as a monomer or a homodimer. Interacts with C1D, NR2E3, SP1 and ZNHIT1. Interacts with OPHN1 (via C-terminus). Interacts with PER2; the interaction associates PER2 to BMAL1 promoter region. Interacts with CRY1. Interacts with CCAR2. Interacts with SIAH2. Interacts with FBXW7 and CDK1. Interacts with HUWE1. Interacts with NR0B2. Interacts with NFIL3. Interacts (via domain NR LBD) with HSP90AA1 and HSP90AB1. Ubiquitinated, leading to its proteasomal degradation. Ubiquitinated by the SCF(FBXW7) complex when phosphorylated by CDK1 leading to its proteasomal degradation. Ubiquitinated by SIAH2; leading to its proteasomal degradation. Rapidly ubiquitinated in response to inflammatory triggers and sumoylation is a prerequisite to its ubiquitination. Post-translationally, sumoylated by UBE2I, desumoylated by SENP1, and sumoylation is a prerequisite to its ubiquitination. In terms of processing, phosphorylated by CSNK1E; phosphorylation enhances its cytoplasmic localization. Undergoes lysosome-mediated degradation in a time-dependent manner in the liver. As to expression, expressed in all tissues and cell lines examined. Expressed at high levels in some squamous carcinoma cell lines.

It is found in the nucleus. It localises to the cytoplasm. The protein localises to the cell projection. The protein resides in the dendrite. Its subcellular location is the dendritic spine. In terms of biological role, transcriptional repressor which coordinates circadian rhythm and metabolic pathways in a heme-dependent manner. Integral component of the complex transcription machinery that governs circadian rhythmicity and forms a critical negative limb of the circadian clock by directly repressing the expression of core clock components BMAL1, CLOCK and CRY1. Also regulates genes involved in metabolic functions, including lipid and bile acid metabolism, adipogenesis, gluconeogenesis and the macrophage inflammatory response. Acts as a receptor for heme which stimulates its interaction with the NCOR1/HDAC3 corepressor complex, enhancing transcriptional repression. Recognizes two classes of DNA response elements within the promoter of its target genes and can bind to DNA as either monomers or homodimers, depending on the nature of the response element. Binds as a monomer to a response element composed of the consensus half-site motif 5'-[A/G]GGTCA-3' preceded by an A/T-rich 5' sequence (RevRE), or as a homodimer to a direct repeat of the core motif spaced by two nucleotides (RevDR-2). Acts as a potent competitive repressor of ROR alpha (RORA) function and regulates the levels of its ligand heme by repressing the expression of PPARGC1A, a potent inducer of heme synthesis. Regulates lipid metabolism by repressing the expression of APOC3 and by influencing the activity of sterol response element binding proteins (SREBPs); represses INSIG2 which interferes with the proteolytic activation of SREBPs which in turn govern the rhythmic expression of enzymes with key functions in sterol and fatty acid synthesis. Regulates gluconeogenesis via repression of G6PC1 and PEPCK and adipocyte differentiation via repression of PPARG. Regulates glucagon release in pancreatic alpha-cells via the AMPK-NAMPT-SIRT1 pathway and the proliferation, glucose-induced insulin secretion and expression of key lipogenic genes in pancreatic-beta cells. Positively regulates bile acid synthesis by increasing hepatic expression of CYP7A1 via repression of NR0B2 and NFIL3 which are negative regulators of CYP7A1. Modulates skeletal muscle oxidative capacity by regulating mitochondrial biogenesis and autophagy; controls mitochondrial biogenesis and respiration by interfering with the STK11-PRKAA1/2-SIRT1-PPARGC1A signaling pathway. Represses the expression of SERPINE1/PAI1, an important modulator of cardiovascular disease and the expression of inflammatory cytokines and chemokines in macrophages. Represses gene expression at a distance in macrophages by inhibiting the transcription of enhancer-derived RNAs (eRNAs). Plays a role in the circadian regulation of body temperature and negatively regulates thermogenic transcriptional programs in brown adipose tissue (BAT); imposes a circadian oscillation in BAT activity, increasing body temperature when awake and depressing thermogenesis during sleep. In concert with NR2E3, regulates transcriptional networks critical for photoreceptor development and function. In addition to its activity as a repressor, can also act as a transcriptional activator. In the ovarian granulosa cells acts as a transcriptional activator of STAR which plays a role in steroid biosynthesis. In collaboration with SP1, activates GJA1 transcription in a heme-independent manner. Represses the transcription of CYP2B10, CYP4A10 and CYP4A14. Represses the transcription of CES2. Represses and regulates the circadian expression of TSHB in a NCOR1-dependent manner. Negatively regulates the protein stability of NR3C1 and influences the time-dependent subcellular distribution of NR3C1, thereby affecting its transcriptional regulatory activity. Plays a critical role in the circadian control of neutrophilic inflammation in the lung; under resting, non-stress conditions, acts as a rhythmic repressor to limit inflammatory activity whereas in the presence of inflammatory triggers undergoes ubiquitin-mediated degradation thereby relieving inhibition of the inflammatory response. Plays a key role in the circadian regulation of microglial activation and neuroinflammation; suppresses microglial activation through the NF-kappaB pathway in the central nervous system. Plays a role in the regulation of the diurnal rhythms of lipid and protein metabolism in the skeletal muscle via transcriptional repression of genes controlling lipid and amino acid metabolism in the muscle. The polypeptide is Nuclear receptor subfamily 1 group D member 1 (NR1D1) (Ovis aries (Sheep)).